We begin with the raw amino-acid sequence, 352 residues long: C5a anaphylatoxin chemotactic receptor 1 (352 aa).

At 1-38 the chain is on the extracellular side; that stretch reads MASMNFSPPEYPDYGTATLDPNIFVDESLNTPKLSVPD. Sulfotyrosine occurs at positions 11 and 14. Residues 39 to 65 form a helical membrane-spanning segment; sequence MIALVIFVMVFLVGVPGNFLVVWVTGF. Residues 66–70 are Cytoplasmic-facing; that stretch reads EVRRT. Residues 71–94 traverse the membrane as a helical segment; sequence INAIWFLNLAVADLLSCLALPILF. Residues 95–111 are Extracellular-facing; that stretch reads SSIVQQGYWPFGNAACR. Cys110 and Cys189 are oxidised to a cystine. The chain crosses the membrane as a helical span at residues 112–133; the sequence is ILPSLILLNMYASILLLTTISA. Over 134 to 154 the chain is Cytoplasmic; the sequence is DRFVLVFNPIWCQNYRGPQLA. A helical transmembrane segment spans residues 155 to 175; that stretch reads WAACSVAWAVALLLTVPSFIF. At 176-202 the chain is on the extracellular side; it reads RGVHTEYFPFWMTCGVDYSGVGVLVER. Residues 203-228 form a helical membrane-spanning segment; that stretch reads GVAILRLLMGFLGPLVILSICYTFLL. The Cytoplasmic portion of the chain corresponds to 229 to 244; that stretch reads IRTWSRKATRSTKTLK. The chain crosses the membrane as a helical span at residues 245 to 267; that stretch reads VVVAVVVSFFVLWLPYQVTGMMM. At 268-284 the chain is on the extracellular side; the sequence is ALFYKHSESFRRVSRLD. The chain crosses the membrane as a helical span at residues 285-305; sequence SLCVAVAYINCCINPIIYVLA. The Cytoplasmic segment spans residues 306–352; the sequence is AQGFHSRFLKSLPARLRQVLAEESVGRDSKSITLSTVDTPAQKSQGV. Phosphoserine occurs at positions 316, 329, 334, 336, and 340.

This sequence belongs to the G-protein coupled receptor 1 family. As to quaternary structure, homodimer. May also form higher-order oligomers. Interacts (when phosphorylated) with ARRB1 and ARRB2; the interaction is associated with internalization of C5aR. Post-translationally, sulfation plays a critical role in the association of C5aR with C5a, but no significant role in the ability of the receptor to transduce a signal and mobilize calcium in response to a small peptide agonist. Phosphorylated on serine residues in response to C5a binding, resulting in internalization of the receptor and short-term desensitization to C5a.

Its subcellular location is the cell membrane. It localises to the cytoplasmic vesicle. Its function is as follows. Receptor for the chemotactic and inflammatory peptide anaphylatoxin C5a. The ligand interacts with at least two sites on the receptor: a high-affinity site on the extracellular N-terminus, and a second site in the transmembrane region which activates downstream signaling events. Receptor activation stimulates chemotaxis, granule enzyme release, intracellular calcium release and superoxide anion production. The chain is C5a anaphylatoxin chemotactic receptor 1 (C5AR1) from Canis lupus familiaris (Dog).